The primary structure comprises 359 residues: 3-dehydroquinate synthase (359 aa).

NAD(+)-binding positions include 71–76 (DGEAYK), 105–109 (GVIGD), 129–130 (TT), Lys142, and Lys151. 3 residues coordinate Zn(2+): Glu184, His247, and His264.

Belongs to the sugar phosphate cyclases superfamily. Dehydroquinate synthase family. The cofactor is Co(2+). Zn(2+) is required as a cofactor. Requires NAD(+) as cofactor.

Its subcellular location is the cytoplasm. It catalyses the reaction 7-phospho-2-dehydro-3-deoxy-D-arabino-heptonate = 3-dehydroquinate + phosphate. The protein operates within metabolic intermediate biosynthesis; chorismate biosynthesis; chorismate from D-erythrose 4-phosphate and phosphoenolpyruvate: step 2/7. In terms of biological role, catalyzes the conversion of 3-deoxy-D-arabino-heptulosonate 7-phosphate (DAHP) to dehydroquinate (DHQ). This is 3-dehydroquinate synthase from Burkholderia mallei (strain NCTC 10247).